We begin with the raw amino-acid sequence, 346 residues long: DNA repair protein XRCC3 (346 aa).

Position 1 is an N-acetylmethionine (M1). G107–T114 is an ATP binding site.

This sequence belongs to the RecA family. RAD51 subfamily. As to quaternary structure, interacts with RAD51C and RAD51. Part of the CX3 complex consisting of RAD51C and XRCC3; the complex has a ring-like structure arranged into a flat disk around a central channel; CX3 can interact with RAD51 in vitro. Forms a complex with FANCD2, BRCA2 and phosphorylated FANCG. Interacts with SWSAP1 and ZSWIM7; involved in homologous recombination repair. Interacts directly with PALB2 which may serve as a scaffold for a HR complex containing PALB2, BRCA2, RAD51C, RAD51 and XRCC3.

It localises to the nucleus. Its subcellular location is the cytoplasm. The protein resides in the perinuclear region. The protein localises to the mitochondrion. In terms of biological role, involved in the homologous recombination repair (HRR) pathway of double-stranded DNA, thought to repair chromosomal fragmentation, translocations and deletions. Part of the RAD51 paralog protein complex CX3 which acts in the BRCA1-BRCA2-dependent HR pathway. Upon DNA damage, CX3 acts downstream of RAD51 recruitment; the complex binds predominantly to the intersection of the four duplex arms of the Holliday junction (HJ) and to junctions of replication forks. Involved in HJ resolution and thus in processing HR intermediates late in the DNA repair process; the function may be linked to the CX3 complex and seems to involve GEN1 during mitotic cell cycle progression. Part of a PALB2-scaffolded HR complex containing BRCA2 and RAD51C and which is thought to play a role in DNA repair by HR. Plays a role in regulating mitochondrial DNA copy number under conditions of oxidative stress in the presence of RAD51 and RAD51C. This chain is DNA repair protein XRCC3 (XRCC3), found in Homo sapiens (Human).